The chain runs to 138 residues: Large ribosomal subunit protein uL16 (138 aa).

This sequence belongs to the universal ribosomal protein uL16 family. In terms of assembly, part of the 50S ribosomal subunit.

Binds 23S rRNA and is also seen to make contacts with the A and possibly P site tRNAs. In Syntrophobacter fumaroxidans (strain DSM 10017 / MPOB), this protein is Large ribosomal subunit protein uL16.